The following is a 132-amino-acid chain: Fatty acid-binding protein 2 (132 aa).

Serine 2 is modified (N-acetylserine). Hexadecanoate-binding positions include glutamine 40 and 128–130 (RYY).

The protein belongs to the calycin superfamily. Fatty-acid binding protein (FABP) family. In terms of assembly, monomer. In terms of tissue distribution, midgut.

It is found in the cytoplasm. Functionally, binds fatty acids in a 1:1 molar ratio. The protein is Fatty acid-binding protein 2 (MFB2) of Manduca sexta (Tobacco hawkmoth).